The following is a 154-amino-acid chain: Peptide deformylase (154 aa).

2 residues coordinate Fe cation: C90 and H132. Residue E133 is part of the active site. H136 contacts Fe cation.

Belongs to the polypeptide deformylase family. It depends on Fe(2+) as a cofactor.

The catalysed reaction is N-terminal N-formyl-L-methionyl-[peptide] + H2O = N-terminal L-methionyl-[peptide] + formate. In terms of biological role, removes the formyl group from the N-terminal Met of newly synthesized proteins. Requires at least a dipeptide for an efficient rate of reaction. N-terminal L-methionine is a prerequisite for activity but the enzyme has broad specificity at other positions. The chain is Peptide deformylase from Desulforudis audaxviator (strain MP104C).